Here is a 289-residue protein sequence, read N- to C-terminus: Phosphatidylserine decarboxylase proenzyme (289 aa).

Active-site charge relay system; for autoendoproteolytic cleavage activity residues include D92, H149, and S254. S254 (schiff-base intermediate with substrate; via pyruvic acid; for decarboxylase activity) is an active-site residue. At S254 the chain carries Pyruvic acid (Ser); by autocatalysis.

It belongs to the phosphatidylserine decarboxylase family. PSD-B subfamily. Prokaryotic type I sub-subfamily. As to quaternary structure, heterodimer of a large membrane-associated beta subunit and a small pyruvoyl-containing alpha subunit. Pyruvate is required as a cofactor. Is synthesized initially as an inactive proenzyme. Formation of the active enzyme involves a self-maturation process in which the active site pyruvoyl group is generated from an internal serine residue via an autocatalytic post-translational modification. Two non-identical subunits are generated from the proenzyme in this reaction, and the pyruvate is formed at the N-terminus of the alpha chain, which is derived from the carboxyl end of the proenzyme. The autoendoproteolytic cleavage occurs by a canonical serine protease mechanism, in which the side chain hydroxyl group of the serine supplies its oxygen atom to form the C-terminus of the beta chain, while the remainder of the serine residue undergoes an oxidative deamination to produce ammonia and the pyruvoyl prosthetic group on the alpha chain. During this reaction, the Ser that is part of the protease active site of the proenzyme becomes the pyruvoyl prosthetic group, which constitutes an essential element of the active site of the mature decarboxylase.

Its subcellular location is the cell membrane. It carries out the reaction a 1,2-diacyl-sn-glycero-3-phospho-L-serine + H(+) = a 1,2-diacyl-sn-glycero-3-phosphoethanolamine + CO2. The protein operates within phospholipid metabolism; phosphatidylethanolamine biosynthesis; phosphatidylethanolamine from CDP-diacylglycerol: step 2/2. Its function is as follows. Catalyzes the formation of phosphatidylethanolamine (PtdEtn) from phosphatidylserine (PtdSer). This Pseudomonas aeruginosa (strain LESB58) protein is Phosphatidylserine decarboxylase proenzyme.